The sequence spans 297 residues: Probable endonuclease 4 (297 aa).

Zn(2+) is bound by residues His69, His110, Glu145, Asp179, His182, His214, Asp227, His229, and Glu259.

Belongs to the AP endonuclease 2 family. Zn(2+) serves as cofactor.

It catalyses the reaction Endonucleolytic cleavage to 5'-phosphooligonucleotide end-products.. Functionally, endonuclease IV plays a role in DNA repair. It cleaves phosphodiester bonds at apurinic or apyrimidinic (AP) sites, generating a 3'-hydroxyl group and a 5'-terminal sugar phosphate. The sequence is that of Probable endonuclease 4 from Listeria monocytogenes serovar 1/2a (strain ATCC BAA-679 / EGD-e).